The chain runs to 471 residues: Glutamate--tRNA ligase (471 aa).

The short motif at 9-19 (PSPTGYLHVGG) is the 'HIGH' region element. Residues Cys98, Cys100, Cys125, and Asp127 each coordinate Zn(2+). A 'KMSKS' region motif is present at residues 237–241 (KLSKR). Lys240 lines the ATP pocket.

The protein belongs to the class-I aminoacyl-tRNA synthetase family. Glutamate--tRNA ligase type 1 subfamily. As to quaternary structure, monomer. The cofactor is Zn(2+).

Its subcellular location is the cytoplasm. The catalysed reaction is tRNA(Glu) + L-glutamate + ATP = L-glutamyl-tRNA(Glu) + AMP + diphosphate. Its function is as follows. Catalyzes the attachment of glutamate to tRNA(Glu) in a two-step reaction: glutamate is first activated by ATP to form Glu-AMP and then transferred to the acceptor end of tRNA(Glu). The sequence is that of Glutamate--tRNA ligase from Yersinia pestis.